We begin with the raw amino-acid sequence, 213 residues long: GTP cyclohydrolase 1 (213 aa).

Cysteine 104, histidine 107, and cysteine 175 together coordinate Zn(2+).

The protein belongs to the GTP cyclohydrolase I family. As to quaternary structure, toroid-shaped homodecamer, composed of two pentamers of five dimers.

It carries out the reaction GTP + H2O = 7,8-dihydroneopterin 3'-triphosphate + formate + H(+). The protein operates within cofactor biosynthesis; 7,8-dihydroneopterin triphosphate biosynthesis; 7,8-dihydroneopterin triphosphate from GTP: step 1/1. The protein is GTP cyclohydrolase 1 of Brucella anthropi (strain ATCC 49188 / DSM 6882 / CCUG 24695 / JCM 21032 / LMG 3331 / NBRC 15819 / NCTC 12168 / Alc 37) (Ochrobactrum anthropi).